Here is an 87-residue protein sequence, read N- to C-terminus: Exodeoxyribonuclease 7 small subunit (87 aa).

The protein belongs to the XseB family. As to quaternary structure, heterooligomer composed of large and small subunits.

Its subcellular location is the cytoplasm. The catalysed reaction is Exonucleolytic cleavage in either 5'- to 3'- or 3'- to 5'-direction to yield nucleoside 5'-phosphates.. In terms of biological role, bidirectionally degrades single-stranded DNA into large acid-insoluble oligonucleotides, which are then degraded further into small acid-soluble oligonucleotides. In Solidesulfovibrio magneticus (strain ATCC 700980 / DSM 13731 / RS-1) (Desulfovibrio magneticus), this protein is Exodeoxyribonuclease 7 small subunit.